A 257-amino-acid chain; its full sequence is Phosphate import ATP-binding protein PstB (257 aa).

In terms of domain architecture, ABC transporter spans 4–252 (LKLNDVNIYY…PDNKETEDYI (249 aa)). 36 to 43 (GPSGCGKS) lines the ATP pocket.

It belongs to the ABC transporter superfamily. Phosphate importer (TC 3.A.1.7) family. As to quaternary structure, the complex is composed of two ATP-binding proteins (PstB), two transmembrane proteins (PstC and PstA) and a solute-binding protein (PstS).

The protein resides in the cell membrane. The catalysed reaction is phosphate(out) + ATP + H2O = ADP + 2 phosphate(in) + H(+). Part of the ABC transporter complex PstSACB involved in phosphate import. Responsible for energy coupling to the transport system. The polypeptide is Phosphate import ATP-binding protein PstB (Corynebacterium efficiens (strain DSM 44549 / YS-314 / AJ 12310 / JCM 11189 / NBRC 100395)).